The primary structure comprises 477 residues: Glycogen synthase (477 aa).

An ADP-alpha-D-glucose-binding site is contributed by lysine 15.

Belongs to the glycosyltransferase 1 family. Bacterial/plant glycogen synthase subfamily.

It catalyses the reaction [(1-&gt;4)-alpha-D-glucosyl](n) + ADP-alpha-D-glucose = [(1-&gt;4)-alpha-D-glucosyl](n+1) + ADP + H(+). It functions in the pathway glycan biosynthesis; glycogen biosynthesis. Synthesizes alpha-1,4-glucan chains using ADP-glucose. This Escherichia fergusonii (strain ATCC 35469 / DSM 13698 / CCUG 18766 / IAM 14443 / JCM 21226 / LMG 7866 / NBRC 102419 / NCTC 12128 / CDC 0568-73) protein is Glycogen synthase.